The sequence spans 244 residues: Phosphoadenosine 5'-phosphosulfate reductase (244 aa).

The active-site Nucleophile; cysteine thiosulfonate intermediate is cysteine 239.

This sequence belongs to the PAPS reductase family. CysH subfamily.

It is found in the cytoplasm. The enzyme catalyses [thioredoxin]-disulfide + sulfite + adenosine 3',5'-bisphosphate + 2 H(+) = [thioredoxin]-dithiol + 3'-phosphoadenylyl sulfate. It participates in sulfur metabolism; hydrogen sulfide biosynthesis; sulfite from sulfate: step 3/3. Catalyzes the formation of sulfite from phosphoadenosine 5'-phosphosulfate (PAPS) using thioredoxin as an electron donor. The polypeptide is Phosphoadenosine 5'-phosphosulfate reductase (Pectobacterium atrosepticum (strain SCRI 1043 / ATCC BAA-672) (Erwinia carotovora subsp. atroseptica)).